Reading from the N-terminus, the 287-residue chain is HTH-type transcriptional regulator MurR (287 aa).

The HTH rpiR-type domain occupies 1–77 (MLYLAKMRNA…MALIEEHSVS (77 aa)). Positions 37–56 (SRNMAKQLEISQSSIVKFAQ) form a DNA-binding region, H-T-H motif. The region spanning 128-268 (VINLISKAPL…FVGMVQLNDV (141 aa)) is the SIS domain.

Homotetramer.

The protein operates within amino-sugar metabolism; N-acetylmuramate degradation [regulation]. Its function is as follows. Represses the expression of the murPQ operon involved in the uptake and degradation of N-acetylmuramic acid (MurNAc). Binds to two adjacent inverted repeats within the operator region. MurNAc 6-phosphate, the substrate of MurQ, is the specific inducer that weakens binding of MurR to the operator. In Salmonella arizonae (strain ATCC BAA-731 / CDC346-86 / RSK2980), this protein is HTH-type transcriptional regulator MurR.